Reading from the N-terminus, the 237-residue chain is 1-(5-phosphoribosyl)-5-[(5-phosphoribosylamino)methylideneamino] imidazole-4-carboxamide isomerase (237 aa).

D8 acts as the Proton acceptor in catalysis. The active-site Proton donor is the D130.

This sequence belongs to the HisA/HisF family.

The protein localises to the cytoplasm. It carries out the reaction 1-(5-phospho-beta-D-ribosyl)-5-[(5-phospho-beta-D-ribosylamino)methylideneamino]imidazole-4-carboxamide = 5-[(5-phospho-1-deoxy-D-ribulos-1-ylimino)methylamino]-1-(5-phospho-beta-D-ribosyl)imidazole-4-carboxamide. It functions in the pathway amino-acid biosynthesis; L-histidine biosynthesis; L-histidine from 5-phospho-alpha-D-ribose 1-diphosphate: step 4/9. The polypeptide is 1-(5-phosphoribosyl)-5-[(5-phosphoribosylamino)methylideneamino] imidazole-4-carboxamide isomerase (Caldicellulosiruptor bescii (strain ATCC BAA-1888 / DSM 6725 / KCTC 15123 / Z-1320) (Anaerocellum thermophilum)).